Consider the following 324-residue polypeptide: MAEPIIVKGQKQNAMGVKRKGAEKVRHVAADAEHFEQERLKKPSWIRAKMPTGPEVMRMKAMMREQKLHSVCEEASCPNLGECFRFGTASFMIMGDICTRRCPFCDVAHGRPRPLNPFEPRNLAQTVYNLGLAHVVITSVDRDDLRDGGAAHFAACIREIRRVSPKMTIEILTPDFRGRAELAVQILSATPPDVFNHNLETIPRFYDVVRPGANYERSLHLLRDYKKACPKKIITKSGLMVGLGEEIEEILQVMQDLRSHDVDMLTVGQYLQPSVHHLPVKRYYTPEEFDFLAQEGKKMGFLHVASGAMVRSSYHADRSAQTVL.

Residues Cys-72, Cys-77, Cys-83, Cys-98, Cys-102, Cys-105, and Ser-313 each coordinate [4Fe-4S] cluster. The Radical SAM core domain maps to Phe-84–Leu-302.

This sequence belongs to the radical SAM superfamily. Lipoyl synthase family. It depends on [4Fe-4S] cluster as a cofactor.

Its subcellular location is the cytoplasm. The catalysed reaction is [[Fe-S] cluster scaffold protein carrying a second [4Fe-4S](2+) cluster] + N(6)-octanoyl-L-lysyl-[protein] + 2 oxidized [2Fe-2S]-[ferredoxin] + 2 S-adenosyl-L-methionine + 4 H(+) = [[Fe-S] cluster scaffold protein] + N(6)-[(R)-dihydrolipoyl]-L-lysyl-[protein] + 4 Fe(3+) + 2 hydrogen sulfide + 2 5'-deoxyadenosine + 2 L-methionine + 2 reduced [2Fe-2S]-[ferredoxin]. It functions in the pathway protein modification; protein lipoylation via endogenous pathway; protein N(6)-(lipoyl)lysine from octanoyl-[acyl-carrier-protein]: step 2/2. Its function is as follows. Catalyzes the radical-mediated insertion of two sulfur atoms into the C-6 and C-8 positions of the octanoyl moiety bound to the lipoyl domains of lipoate-dependent enzymes, thereby converting the octanoylated domains into lipoylated derivatives. The polypeptide is Lipoyl synthase (Dichelobacter nodosus (strain VCS1703A)).